The sequence spans 220 residues: Large ribosomal subunit protein uL3 (220 aa).

Residues 130–156 (AIKRHGQSRGPMSHGSHFHRAPGSVGM) are disordered.

It belongs to the universal ribosomal protein uL3 family. In terms of assembly, part of the 50S ribosomal subunit. Forms a cluster with proteins L14 and L19.

In terms of biological role, one of the primary rRNA binding proteins, it binds directly near the 3'-end of the 23S rRNA, where it nucleates assembly of the 50S subunit. This chain is Large ribosomal subunit protein uL3, found in Staphylococcus aureus (strain Mu3 / ATCC 700698).